The following is a 498-amino-acid chain: ATP synthase subunit beta, chloroplastic (498 aa).

Residue 172–179 participates in ATP binding; that stretch reads GGAGVGKT.

The protein belongs to the ATPase alpha/beta chains family. As to quaternary structure, F-type ATPases have 2 components, CF(1) - the catalytic core - and CF(0) - the membrane proton channel. CF(1) has five subunits: alpha(3), beta(3), gamma(1), delta(1), epsilon(1). CF(0) has four main subunits: a(1), b(1), b'(1) and c(9-12).

It is found in the plastid. It localises to the chloroplast thylakoid membrane. The catalysed reaction is ATP + H2O + 4 H(+)(in) = ADP + phosphate + 5 H(+)(out). Functionally, produces ATP from ADP in the presence of a proton gradient across the membrane. The catalytic sites are hosted primarily by the beta subunits. The polypeptide is ATP synthase subunit beta, chloroplastic (Pelargonium hortorum (Common geranium)).